A 181-amino-acid chain; its full sequence is High mobility group protein B4 (181 aa).

A DNA-binding region (HMG box 1) is located at residues Pro-9–Ile-79. Positions Gly-80 to Asp-89 are enriched in basic residues. Positions Gly-80–Phe-100 are disordered. Residues Pro-93–Arg-161 constitute a DNA-binding region (HMG box 2).

It belongs to the HMGB family. In terms of tissue distribution, expressed in adult germ cells (at protein level).

It localises to the nucleus. It is found in the chromosome. This chain is High mobility group protein B4 (Hmgb4), found in Mus musculus (Mouse).